Consider the following 340-residue polypeptide: Phenylalanine--tRNA ligase alpha subunit (340 aa).

Glu255 contacts Mg(2+).

It belongs to the class-II aminoacyl-tRNA synthetase family. Phe-tRNA synthetase alpha subunit type 1 subfamily. Tetramer of two alpha and two beta subunits. Mg(2+) is required as a cofactor.

Its subcellular location is the cytoplasm. The catalysed reaction is tRNA(Phe) + L-phenylalanine + ATP = L-phenylalanyl-tRNA(Phe) + AMP + diphosphate + H(+). The protein is Phenylalanine--tRNA ligase alpha subunit of Desulfitobacterium hafniense (strain Y51).